Consider the following 295-residue polypeptide: uncharacterized protein (295 aa).

It localises to the plastid. Its subcellular location is the chloroplast. This is an uncharacterized protein from Euglena gracilis.